We begin with the raw amino-acid sequence, 716 residues long: Fatty acid oxidation complex subunit alpha (716 aa).

The enoyl-CoA hydratase/isomerase stretch occupies residues Met1 to Ala188. A substrate-binding site is contributed by Asp295. Residues Lys310–Ala716 are 3-hydroxyacyl-CoA dehydrogenase. NAD(+) is bound by residues Met323, Asp342, Val399–Glu401, Lys406, and Ser428. The For 3-hydroxyacyl-CoA dehydrogenase activity role is filled by His449. Residue Asn452 participates in NAD(+) binding. Substrate-binding residues include Asn499 and Tyr659.

It in the N-terminal section; belongs to the enoyl-CoA hydratase/isomerase family. The protein in the C-terminal section; belongs to the 3-hydroxyacyl-CoA dehydrogenase family. As to quaternary structure, heterotetramer of two alpha chains (FadB) and two beta chains (FadA).

The enzyme catalyses a (3S)-3-hydroxyacyl-CoA + NAD(+) = a 3-oxoacyl-CoA + NADH + H(+). It carries out the reaction a (3S)-3-hydroxyacyl-CoA = a (2E)-enoyl-CoA + H2O. It catalyses the reaction a 4-saturated-(3S)-3-hydroxyacyl-CoA = a (3E)-enoyl-CoA + H2O. The catalysed reaction is (3S)-3-hydroxybutanoyl-CoA = (3R)-3-hydroxybutanoyl-CoA. The enzyme catalyses a (3Z)-enoyl-CoA = a 4-saturated (2E)-enoyl-CoA. It carries out the reaction a (3E)-enoyl-CoA = a 4-saturated (2E)-enoyl-CoA. The protein operates within lipid metabolism; fatty acid beta-oxidation. Functionally, involved in the aerobic and anaerobic degradation of long-chain fatty acids via beta-oxidation cycle. Catalyzes the formation of 3-oxoacyl-CoA from enoyl-CoA via L-3-hydroxyacyl-CoA. It can also use D-3-hydroxyacyl-CoA and cis-3-enoyl-CoA as substrate. The protein is Fatty acid oxidation complex subunit alpha of Shewanella amazonensis (strain ATCC BAA-1098 / SB2B).